The primary structure comprises 99 residues: MGKKVKKAVKKVTKSVKKVVKEGARPVKQVAGGLAGLAGGTGEAQMVEVPQAAAQIVDVPEKEVSTEDEAQTESGRKKARAGGKKSLSVARSSGGGINI.

Residues 59-99 are disordered; the sequence is VPEKEVSTEDEAQTESGRKKARAGGKKSLSVARSSGGGINI.

It belongs to the T7likevirus protein 7.3 family.

It localises to the virion. In terms of biological role, plays an essential role most probably in virion tail assembly. May form a scaffold around which gp11 and gp12 polymerize. Gets ejected from the infecting particle into the bacterial cell. The chain is Protein 7.3 from Escherichia phage T7 (Bacteriophage T7).